The chain runs to 298 residues: Release factor glutamine methyltransferase (298 aa).

S-adenosyl-L-methionine contacts are provided by residues Gly-131–Gly-135, Asp-162, Trp-189, and Asn-205. Residue Asn-205–Tyr-208 participates in substrate binding.

This sequence belongs to the protein N5-glutamine methyltransferase family. PrmC subfamily.

The enzyme catalyses L-glutaminyl-[peptide chain release factor] + S-adenosyl-L-methionine = N(5)-methyl-L-glutaminyl-[peptide chain release factor] + S-adenosyl-L-homocysteine + H(+). Its function is as follows. Methylates the class 1 translation termination release factors RF1/PrfA and RF2/PrfB on the glutamine residue of the universally conserved GGQ motif. The polypeptide is Release factor glutamine methyltransferase (Pasteurella multocida (strain Pm70)).